The sequence spans 149 residues: uncharacterized protein (149 aa).

The disordered stretch occupies residues 34–94 (HTPCLPKVPR…NPIGSQRIHS (61 aa)). Positions 56-66 (QSPHRQGDRRR) are enriched in basic and acidic residues.

The protein localises to the mitochondrion. This is an uncharacterized protein from Arabidopsis thaliana (Mouse-ear cress).